The primary structure comprises 521 residues: Importin subunit alpha-4 (521 aa).

The disordered stretch occupies residues 1 to 29 (MAENPGLENHRIKSFKNKGRDVETMRRHR). Residue alanine 2 is modified to N-acetylalanine. The region spanning 2 to 58 (AENPGLENHRIKSFKNKGRDVETMRRHRNEVTVELRKNKRDEHLLKKRNVPQEESLE) is the IBB domain. The segment covering 18-29 (KGRDVETMRRHR) has biased composition (basic and acidic residues). A Nuclear localization signal motif is present at residues 43–52 (EHLLKKRNVP). Serine 56 and serine 60 each carry phosphoserine. Residues 66–106 (FKAQNVTLEAILQNATSDNPVVQLSAVQAARKLLSSDRNPP) form an ARM 1; truncated repeat. 8 ARM repeats span residues 107–149 (IDDL…TSAQ), 150–194 (TQAV…CRDY), 195–233 (VISL…NKDP), 234–278 (PPPM…EQIQ), 279–318 (MVID…TDEQ), 319–360 (TQVV…NQQQ), 361–400 (VQAV…ISGR), and 401–443 (KDQV…IMAG). The interval 137–229 (WALTNIASGT…VTWVIVNLCR (93 aa)) is NLS binding site (major). Residues 306–394 (RAVGNIVTGT…QKEAAWAISN (89 aa)) are NLS binding site (minor). One copy of the ARM 10; atypical repeat lies at 447 to 485 (STIAEIIEECGGLEKIEVLQQHENEDIYKLAFEIIDQYF). A Phosphotyrosine modification is found at tyrosine 484.

This sequence belongs to the importin alpha family. Forms a complex with importin subunit beta-1. Interacts with DDX21. Interacts with NCBP1, NCBP2/CBP20 and NCBP3. Interacts with RCC1. Interacts with ZC3H11A. As to expression, detected more or less in all tissues examined (Ehrlich ascites tumor cells, testis, kidney, spleen, liver, heart, lung, thymus, skeletal muscle, cerebellum and brain (without cerebellum)).

The protein resides in the cytoplasm. It localises to the nucleus. In terms of biological role, functions in nuclear protein import as an adapter protein for nuclear receptor KPNB1. Binds specifically and directly to substrates containing either a simple or bipartite NLS motif. Docking of the importin/substrate complex to the nuclear pore complex (NPC) is mediated by KPNB1 through binding to nucleoporin FxFG repeats and the complex is subsequently translocated through the pore by an energy requiring, Ran-dependent mechanism. At the nucleoplasmic side of the NPC, Ran binds to importin-beta and the three components separate and importin-alpha and -beta are re-exported from the nucleus to the cytoplasm where GTP hydrolysis releases Ran from importin. The directionality of nuclear import is thought to be conferred by an asymmetric distribution of the GTP- and GDP-bound forms of Ran between the cytoplasm and nucleus. In vitro, mediates the nuclear import of human cytomegalovirus UL84 by recognizing a non-classical NLS. The polypeptide is Importin subunit alpha-4 (Kpna3) (Mus musculus (Mouse)).